We begin with the raw amino-acid sequence, 215 residues long: Probable phosphoglycerate mutase GpmB (215 aa).

Substrate is bound by residues 8–15 (RHGETQWN), 21–22 (QG), Arg58, Lys60, 82–85 (ELDM), 104–105 (RR), and 151–152 (GI). The active-site Tele-phosphohistidine intermediate is His9. Glu82 functions as the Proton donor/acceptor in the catalytic mechanism.

Belongs to the phosphoglycerate mutase family. GpmB subfamily.

It carries out the reaction (2R)-2-phosphoglycerate = (2R)-3-phosphoglycerate. It functions in the pathway carbohydrate degradation; glycolysis; pyruvate from D-glyceraldehyde 3-phosphate: step 3/5. The protein is Probable phosphoglycerate mutase GpmB of Salmonella typhi.